A 136-amino-acid polypeptide reads, in one-letter code: ATP synthase epsilon chain (136 aa).

Belongs to the ATPase epsilon chain family. As to quaternary structure, F-type ATPases have 2 components, CF(1) - the catalytic core - and CF(0) - the membrane proton channel. CF(1) has five subunits: alpha(3), beta(3), gamma(1), delta(1), epsilon(1). CF(0) has three main subunits: a, b and c.

The protein localises to the cell membrane. In terms of biological role, produces ATP from ADP in the presence of a proton gradient across the membrane. This Ureaplasma parvum serovar 3 (strain ATCC 27815 / 27 / NCTC 11736) protein is ATP synthase epsilon chain.